Reading from the N-terminus, the 236-residue chain is Phosphoribosylaminoimidazole-succinocarboxamide synthase (236 aa).

It belongs to the SAICAR synthetase family.

The catalysed reaction is 5-amino-1-(5-phospho-D-ribosyl)imidazole-4-carboxylate + L-aspartate + ATP = (2S)-2-[5-amino-1-(5-phospho-beta-D-ribosyl)imidazole-4-carboxamido]succinate + ADP + phosphate + 2 H(+). It participates in purine metabolism; IMP biosynthesis via de novo pathway; 5-amino-1-(5-phospho-D-ribosyl)imidazole-4-carboxamide from 5-amino-1-(5-phospho-D-ribosyl)imidazole-4-carboxylate: step 1/2. The chain is Phosphoribosylaminoimidazole-succinocarboxamide synthase (purC) from Lactococcus lactis subsp. lactis (strain IL1403) (Streptococcus lactis).